The sequence spans 517 residues: Bifunctional purine biosynthesis protein PurH (517 aa).

Residues 1 to 151 form the MGS-like domain; that stretch reads MTQERKIKRA…KNFAHVAVLC (151 aa).

Belongs to the PurH family.

It catalyses the reaction (6R)-10-formyltetrahydrofolate + 5-amino-1-(5-phospho-beta-D-ribosyl)imidazole-4-carboxamide = 5-formamido-1-(5-phospho-D-ribosyl)imidazole-4-carboxamide + (6S)-5,6,7,8-tetrahydrofolate. The enzyme catalyses IMP + H2O = 5-formamido-1-(5-phospho-D-ribosyl)imidazole-4-carboxamide. The protein operates within purine metabolism; IMP biosynthesis via de novo pathway; 5-formamido-1-(5-phospho-D-ribosyl)imidazole-4-carboxamide from 5-amino-1-(5-phospho-D-ribosyl)imidazole-4-carboxamide (10-formyl THF route): step 1/1. It participates in purine metabolism; IMP biosynthesis via de novo pathway; IMP from 5-formamido-1-(5-phospho-D-ribosyl)imidazole-4-carboxamide: step 1/1. In Elusimicrobium minutum (strain Pei191), this protein is Bifunctional purine biosynthesis protein PurH.